Reading from the N-terminus, the 356-residue chain is Peptide chain release factor 1 (356 aa).

Residue Q230 is modified to N5-methylglutamine. Residues A279–K289 show a composition bias toward basic and acidic residues. The interval A279–E299 is disordered.

The protein belongs to the prokaryotic/mitochondrial release factor family. In terms of processing, methylated by PrmC. Methylation increases the termination efficiency of RF1.

Its subcellular location is the cytoplasm. Functionally, peptide chain release factor 1 directs the termination of translation in response to the peptide chain termination codons UAG and UAA. This is Peptide chain release factor 1 (prfA) from Caulobacter vibrioides (strain ATCC 19089 / CIP 103742 / CB 15) (Caulobacter crescentus).